We begin with the raw amino-acid sequence, 159 residues long: Phosphopantetheine adenylyltransferase (159 aa).

His16 contributes to the ATP binding site. Lys40, Met72, and Arg86 together coordinate substrate. Residues 87 to 89 (GLR), Glu97, and 122 to 128 (YQYLSAS) contribute to the ATP site.

This sequence belongs to the bacterial CoaD family. Homohexamer. Mg(2+) serves as cofactor.

The protein localises to the cytoplasm. It carries out the reaction (R)-4'-phosphopantetheine + ATP + H(+) = 3'-dephospho-CoA + diphosphate. It functions in the pathway cofactor biosynthesis; coenzyme A biosynthesis; CoA from (R)-pantothenate: step 4/5. Functionally, reversibly transfers an adenylyl group from ATP to 4'-phosphopantetheine, yielding dephospho-CoA (dPCoA) and pyrophosphate. This Dehalococcoides mccartyi (strain ATCC BAA-2266 / KCTC 15142 / 195) (Dehalococcoides ethenogenes (strain 195)) protein is Phosphopantetheine adenylyltransferase.